The following is a 621-amino-acid chain: Replication factor A protein 1 (621 aa).

An N-acetylserine modification is found at S2. Position 178 is a phosphoserine; by ATM or ATR (S178). A DNA-binding region (OB) is located at residues 197–284 (WTIKARVSYK…PYELNLDRDT (88 aa)). A C4-type zinc finger spans residues 486–508 (CSNENCNKKVLEQPDGTWRCEKC).

It belongs to the replication factor A protein 1 family. Component of the heterotrimeric canonical replication protein A complex (RPA). Interacts with POB3. In terms of processing, the N-terminus is blocked.

The protein localises to the nucleus. As part of the replication protein A (RPA/RP-A), a single-stranded DNA-binding heterotrimeric complex, may play an essential role in DNA replication, recombination and repair. Binds and stabilizes single-stranded DNA intermediates, preventing complementary DNA reannealing and recruiting different proteins involved in DNA metabolism. Binds to single-stranded sequences participating in DNA replication in addition to those mediating transcriptional repression (URS1) and activation (CAR1). Stimulates the activity of a cognate strand exchange protein (SEP1). It cooperates with T-AG and DNA topoisomerase I to unwind template DNA containing the simian virus 40 origin of DNA replication. This Saccharomyces cerevisiae (strain ATCC 204508 / S288c) (Baker's yeast) protein is Replication factor A protein 1 (RFA1).